The primary structure comprises 320 residues: Olfactory receptor 51E2 (320 aa).

Residues 1 to 24 (MSSCNFTHATFMLIGIPGLEEAHF) are Extracellular-facing. The N-linked (GlcNAc...) asparagine glycan is linked to Asn-5. A helical membrane pass occupies residues 25 to 45 (WFGFPLLSMYAVALFGNCIVV). The Cytoplasmic portion of the chain corresponds to 46 to 53 (FIVRTERS). The helical transmembrane segment at 54-74 (LHAPMYLFLCMLAAIDLALST) threads the bilayer. Residues 75 to 98 (STMPKILALFWFDSREITFDACLA) lie on the Extracellular side of the membrane. A disulfide bridge connects residues Cys-96 and Cys-178. The chain crosses the membrane as a helical span at residues 99–119 (QMFFIHALSAIESTILLAMAF). The Cytoplasmic segment spans residues 120 to 138 (DRYVAICHPLRHAAVLNNT). A helical transmembrane segment spans residues 139–159 (VTVQIGMVALVRGSLFFFPLP). Over 160 to 195 (LLIKRLAFCHSNVLSHSYCVHQDVMKLAYTDTLPNV) the chain is Extracellular. The chain crosses the membrane as a helical span at residues 196–216 (VYGLTAILLVMGVDVMFISLS). The Cytoplasmic portion of the chain corresponds to 217 to 236 (YFLIIRAVLQLPSKSERAKA). A helical transmembrane segment spans residues 237 to 257 (FGTCVSHIGVVLAFYVPLIGL). Over 258–272 (SVVHRFGNSLDPIVH) the chain is Extracellular. A helical membrane pass occupies residues 273 to 293 (VLMGDVYLLLPPVINPIIYGA). At 294–320 (KTKQIRTRVLAMFKISCDKDIEAGGNT) the chain is on the cytoplasmic side.

The protein belongs to the G-protein coupled receptor 1 family. In terms of tissue distribution, expressed in brain and liver. Expressed only in some areas of the brain and in the olfactory epithelium.

It localises to the cell membrane. It is found in the early endosome membrane. Olfactory receptor. The activity of this receptor is probably mediated by G-proteins which induce elevation of intracellular Ca(2+), cAMP and activation of phosphorylation of the protein kinases PKA and MAPK3/MAPK1. Activation of OR51E2 may affect melanocyte proliferation, differentiation, and melanogenesis and may increase proliferation and migration of primary retinal pigment epithelial (RPE) cells. Activated by the short chain fatty acids (SCFA), acetate and propionate. In response to SCFA, may positively regulate renin secretion and increase blood pressure. May also be activated by steroid hormones and regulate cell proliferation. Activated by L-lactate in glomus cells. The chain is Olfactory receptor 51E2 (Or51e2) from Rattus norvegicus (Rat).